Consider the following 256-residue polypeptide: Leucyl/phenylalanyl-tRNA--protein transferase (256 aa).

The protein belongs to the L/F-transferase family.

The protein resides in the cytoplasm. The enzyme catalyses N-terminal L-lysyl-[protein] + L-leucyl-tRNA(Leu) = N-terminal L-leucyl-L-lysyl-[protein] + tRNA(Leu) + H(+). It catalyses the reaction N-terminal L-arginyl-[protein] + L-leucyl-tRNA(Leu) = N-terminal L-leucyl-L-arginyl-[protein] + tRNA(Leu) + H(+). The catalysed reaction is L-phenylalanyl-tRNA(Phe) + an N-terminal L-alpha-aminoacyl-[protein] = an N-terminal L-phenylalanyl-L-alpha-aminoacyl-[protein] + tRNA(Phe). Its function is as follows. Functions in the N-end rule pathway of protein degradation where it conjugates Leu, Phe and, less efficiently, Met from aminoacyl-tRNAs to the N-termini of proteins containing an N-terminal arginine or lysine. The sequence is that of Leucyl/phenylalanyl-tRNA--protein transferase from Hydrogenovibrio crunogenus (strain DSM 25203 / XCL-2) (Thiomicrospira crunogena).